A 326-amino-acid chain; its full sequence is uncharacterized protein (326 aa).

The Proton donor role is filled by Tyr53. Residue 215–225 (SPLAGGLLGGK) coordinates NADP(+). Residues 242–305 (IEKHRLQLEK…AVEISLDKEI (64 aa)) are a coiled coil.

The protein belongs to the aldo/keto reductase family. Aldo/keto reductase 2 subfamily.

This is an uncharacterized protein from Bacillus subtilis (strain 168).